Reading from the N-terminus, the 101-residue chain is Transcription factor ILI2 (101 aa).

The segment at 1 to 22 is disordered; sequence MSSSRRSRTSSRLAAAPPPTDE. The bHLH domain maps to 8-63; it reads RTSSRLAAAPPPTDEQMAELISKLQAVLPTRGGEANAKQASSAEVLQEACRYIRRL.

The protein belongs to the bHLH protein family.

Atypical and probable non DNA-binding bHLH transcription factor that integrates multiple signaling pathways to regulate cell elongation and plant development. This Oryza sativa subsp. indica (Rice) protein is Transcription factor ILI2 (ILI2).